Reading from the N-terminus, the 106-residue chain is Immunoglobulin lambda constant 1 (106 aa).

One can recognise an Ig-like domain in the interval 7-101 (PTVTLFPPSS…EGSTVEKTVA (95 aa)). A disulfide bond links Cys28 and Cys87.

Immunoglobulins are composed of two identical heavy chains and two identical light chains; disulfide-linked.

The protein resides in the secreted. Its subcellular location is the cell membrane. In terms of biological role, constant region of immunoglobulin light chains. Immunoglobulins, also known as antibodies, are membrane-bound or secreted glycoproteins produced by B lymphocytes. In the recognition phase of humoral immunity, the membrane-bound immunoglobulins serve as receptors which, upon binding of a specific antigen, trigger the clonal expansion and differentiation of B lymphocytes into immunoglobulins-secreting plasma cells. Secreted immunoglobulins mediate the effector phase of humoral immunity, which results in the elimination of bound antigens. The antigen binding site is formed by the variable domain of one heavy chain, together with that of its associated light chain. Thus, each immunoglobulin has two antigen binding sites with remarkable affinity for a particular antigen. The variable domains are assembled by a process called V-(D)-J rearrangement and can then be subjected to somatic hypermutations which, after exposure to antigen and selection, allow affinity maturation for a particular antigen. The polypeptide is Immunoglobulin lambda constant 1 (Homo sapiens (Human)).